The chain runs to 790 residues: N-methylputrescine oxidase 1, peroxisomal (790 aa).

The interval 1–23 (MATTKQKVTAPSPSPSSSTASCC) is disordered. Over residues 9–23 (TAPSPSPSSSTASCC) the composition is skewed to low complexity. Residue 423–434 (AFDAGEDGLGKN) participates in substrate binding. Asp-425 serves as the catalytic Proton acceptor. Cysteines 444 and 470 form a disulfide. 506 to 511 (VANYEY) contributes to the substrate binding site. The Schiff-base intermediate with substrate; via topaquinone role is filled by Tyr-509. Tyr-509 bears the 2',4',5'-topaquinone mark. Residues His-559 and His-561 each contribute to the Cu cation site. Mn(2+) contacts are provided by Asp-714 and Ile-715. His-725 is a Cu cation binding site.

Belongs to the copper/topaquinone oxidase family. As to quaternary structure, homodimer. Requires Cu cation as cofactor. Zn(2+) serves as cofactor. It depends on L-topaquinone as a cofactor. In terms of processing, topaquinone (TPQ) is generated by copper-dependent autoxidation of a specific tyrosyl residue. As to expression, mainly expressed in roots, and, to a lower extent, in stems.

It is found in the peroxisome. It catalyses the reaction a primary methyl amine + O2 + H2O = an aldehyde + H2O2 + NH4(+). The enzyme catalyses N-methylputrescine + O2 + H2O = 4-methylaminobutanal + H2O2 + NH4(+). It participates in alkaloid biosynthesis; nicotine biosynthesis. Functionally, involved in the biosynthesis of pyridine alkaloid natural products, leading mainly to the production of anabasine, anatabine, nicotine and nornicotine, effective deterrents against herbivores with antiparasitic and pesticide properties (neurotoxins); nornicotine serves as the precursor in the synthesis of the carcinogen compound N'-nitrosonornicotine (NNN). Amine oxidase which mediates the deamination of N-methylputrescine to produce 4-methylaminobutanal. Oxidizes preferentially N-methylated amines. The chain is N-methylputrescine oxidase 1, peroxisomal from Nicotiana tabacum (Common tobacco).